Reading from the N-terminus, the 348-residue chain is 4-hydroxy-2-oxovalerate aldolase 3 (348 aa).

Positions 8–260 (ITVHDMTLRD…ETGVDVWKIQ (253 aa)) constitute a Pyruvate carboxyltransferase domain. 16–17 (RD) contributes to the substrate binding site. Residue D17 participates in Mn(2+) binding. H20 functions as the Proton acceptor in the catalytic mechanism. The substrate site is built by S170 and H199. Mn(2+) contacts are provided by H199 and H201. Y290 contacts substrate.

This sequence belongs to the 4-hydroxy-2-oxovalerate aldolase family.

The enzyme catalyses (S)-4-hydroxy-2-oxopentanoate = acetaldehyde + pyruvate. This Burkholderia lata (strain ATCC 17760 / DSM 23089 / LMG 22485 / NCIMB 9086 / R18194 / 383) protein is 4-hydroxy-2-oxovalerate aldolase 3.